The chain runs to 202 residues: Outer-membrane lipoprotein LolB (202 aa).

An N-terminal signal peptide occupies residues 1–24 (MESKEQHLIRQYFILAMFFLFLAG). Cysteine 25 carries the N-palmitoyl cysteine lipid modification. A lipid anchor (S-diacylglycerol cysteine) is attached at cysteine 25.

It belongs to the LolB family. In terms of assembly, monomer.

It is found in the cell outer membrane. In terms of biological role, plays a critical role in the incorporation of lipoproteins in the outer membrane after they are released by the LolA protein. The polypeptide is Outer-membrane lipoprotein LolB (Pseudoalteromonas translucida (strain TAC 125)).